The primary structure comprises 689 residues: tRNA 5-methylaminomethyl-2-thiouridine biosynthesis bifunctional protein MnmC (689 aa).

The interval 1–245 (MNQRPIQTAT…KREMLTGTLP (245 aa)) is tRNA (mnm(5)s(2)U34)-methyltransferase. An FAD-dependent cmnm(5)s(2)U34 oxidoreductase region spans residues 270 to 689 (IGGGIVSALT…RSPATQESSR (420 aa)).

In the N-terminal section; belongs to the methyltransferase superfamily. tRNA (mnm(5)s(2)U34)-methyltransferase family. It in the C-terminal section; belongs to the DAO family. The cofactor is FAD.

The protein localises to the cytoplasm. The catalysed reaction is 5-aminomethyl-2-thiouridine(34) in tRNA + S-adenosyl-L-methionine = 5-methylaminomethyl-2-thiouridine(34) in tRNA + S-adenosyl-L-homocysteine + H(+). Its function is as follows. Catalyzes the last two steps in the biosynthesis of 5-methylaminomethyl-2-thiouridine (mnm(5)s(2)U) at the wobble position (U34) in tRNA. Catalyzes the FAD-dependent demodification of cmnm(5)s(2)U34 to nm(5)s(2)U34, followed by the transfer of a methyl group from S-adenosyl-L-methionine to nm(5)s(2)U34, to form mnm(5)s(2)U34. This Yersinia pestis protein is tRNA 5-methylaminomethyl-2-thiouridine biosynthesis bifunctional protein MnmC.